Reading from the N-terminus, the 95-residue chain is Acyl carrier protein (95 aa).

The region spanning 4–79 is the Carrier domain; that stretch reads KEIFERIEQV…HVMELTLDLV (76 aa). An O-(pantetheine 4'-phosphoryl)serine modification is found at serine 39.

This sequence belongs to the acyl carrier protein (ACP) family. Post-translationally, 4'-phosphopantetheine is transferred from CoA to a specific serine of apo-ACP by AcpS. This modification is essential for activity because fatty acids are bound in thioester linkage to the sulfhydryl of the prosthetic group.

The protein localises to the cytoplasm. The protein operates within lipid metabolism; fatty acid biosynthesis. Functionally, carrier of the growing fatty acid chain in fatty acid biosynthesis. The sequence is that of Acyl carrier protein from Saccharopolyspora erythraea (strain ATCC 11635 / DSM 40517 / JCM 4748 / NBRC 13426 / NCIMB 8594 / NRRL 2338).